Reading from the N-terminus, the 197-residue chain is Protein LURP-one-related 9 (197 aa).

It belongs to the LOR family.

Might be related to the phospholipid scramblase and tubby-like superfamily of membrane tethered transcription factors. The polypeptide is Protein LURP-one-related 9 (Arabidopsis thaliana (Mouse-ear cress)).